The chain runs to 155 residues: Large ribosomal subunit protein uL13 (155 aa).

This sequence belongs to the universal ribosomal protein uL13 family. Part of the 50S ribosomal subunit.

In terms of biological role, this protein is one of the early assembly proteins of the 50S ribosomal subunit, although it is not seen to bind rRNA by itself. It is important during the early stages of 50S assembly. The sequence is that of Large ribosomal subunit protein uL13 from Rickettsia felis (strain ATCC VR-1525 / URRWXCal2) (Rickettsia azadi).